Consider the following 292-residue polypeptide: uncharacterized protein (292 aa).

The helical transmembrane segment at 13–35 threads the bilayer; that stretch reads LFILFIIVVCIYLLPRVAINAFY.

The protein belongs to the serine esterase family.

It is found in the membrane. This is an uncharacterized protein from Salmonella typhimurium (strain LT2 / SGSC1412 / ATCC 700720).